Here is a 345-residue protein sequence, read N- to C-terminus: MPISSALAERIATSPKAELHIHIEGSLEPELMFALAERNGVKLPYASVEEVRAAYAFDDLQSFLDLYYAGASVLLTEQDFYDMTAAYVARALADNVHHAEIFFDPQTHTARNVPMHVVIHGIVRALDDAEREHGFSSALILCFLRHLSEEDAFDTLEAALPYIQDPANRIIGVGLDSSERGNPPEKFARVFARCKELGLRLVAHAGEEGPAQYVIDALDILKVERIDHGVRAIDDAALVKRLAAERIALTVCPLSNEKLKVYPDLRDHSLKQLLDAGCAVTLHSDDPAYFGGYMNTNWLATFNALDLSAADAHALARNSFEASFLPEQDKALWLAKVDDHWKAAH.

Zn(2+) contacts are provided by His20, His22, and His204. The active-site Proton donor is the Glu207. Asp285 contacts Zn(2+). Asp286 provides a ligand contact to substrate.

Belongs to the metallo-dependent hydrolases superfamily. Adenosine and AMP deaminases family. Adenine deaminase type 2 subfamily. Zn(2+) serves as cofactor.

It carries out the reaction adenine + H2O + H(+) = hypoxanthine + NH4(+). Functionally, catalyzes the hydrolytic deamination of adenine to hypoxanthine. Plays an important role in the purine salvage pathway and in nitrogen catabolism. The sequence is that of Adenine deaminase from Ralstonia pickettii (strain 12J).